The following is a 328-amino-acid chain: MSKKPVRVAVTGAAGQIGYALLFRIASGEMLGKDQPVILQLLEVPVEGPQKALKGVMMELDDCAFPLLVEMTAHSDPMTAFKDADYALLVGSRPRGPGMERAELLAVNGAIFTAQGKALNAVASRDVRVLVVGNPANTNAYIAMKSAPDLPAKNFTAMLRLDHNRAASQIAAKTGKAVADIEKLTVWGNHSPTMYADYRFATIGGESVAQMINDQEWNANVFLPTVGKRGAAIIEARGSSSAASAANAAIDHMRDWALGTNGKWVTMGIPSGGEYGIPAETMFGFPVTCENGEYKIVEGLEIDAFSQERINITLAELEGEKAGVAHLL.

12 to 18 (GAAGQIG) lines the NAD(+) pocket. Residues R95 and R101 each contribute to the substrate site. NAD(+)-binding positions include N108, Q115, and 132–134 (VGN). 2 residues coordinate substrate: N134 and R165. Catalysis depends on H190, which acts as the Proton acceptor.

Belongs to the LDH/MDH superfamily. MDH type 2 family.

It catalyses the reaction (S)-malate + NAD(+) = oxaloacetate + NADH + H(+). Catalyzes the reversible oxidation of malate to oxaloacetate. The sequence is that of Malate dehydrogenase from Polaromonas naphthalenivorans (strain CJ2).